Here is a 602-residue protein sequence, read N- to C-terminus: MFSAPLRRMMRVTKDEQIQPNSNAPENRKWFPRAPRPLRQFLDTLPRIGTAGSRSATLHVEDEQSPLGATLFDVATGASSINDRDTDASGLEPEKIRRFAWLRLIGTMGALMIAFGALGAGALPVVNNPYVDFPGGNFMSRMLQTSSMIVLIGVGFLVLAWVLMAPLVGIPFKRSGNRTASVSLSMLRRTFGAWVAPIMLTAPLFTQDIYSYLAQGSVTAQGMDAYAGGPLELLGPDNHLARSVPFIWAQSPSPYGPVALSIAASISVITNDSIVGGVLAHRIASLLGVVAAGWAITMLARRCRVSEEASFYLGVLNPLLILHLIGGIHNESILLGFLLVGLELGLRGTDRIQTGLWGPAWTYIALSGVLISCAGLVKVTGFIGLGFVGMALARAFHARGHRHVVAIGVAGLVQVAALVITVVVLSVITGISLGWITGQGGAATIRSWMSMTTNIGVISGFIGMNLGLGDHTAAMLVVTRAAGIAVAAAFMVRMLFATYRGHIHAVGGLGVATFVLVILFPVVHPWYMLWAIVPLASWANRLFFQLGVIAYSTAFSFFVLPRGLALPVGTVFSIYFGAALGFSILLLVGWWSLRRNPTFGLH.

The next 13 helical transmembrane spans lie at 105 to 125, 148 to 168, 190 to 210, 244 to 264, 274 to 294, 320 to 340, 368 to 388, 404 to 424, 448 to 468, 472 to 492, 503 to 523, 546 to 566, and 571 to 591; these read IGTM…ALPV, MIVL…APLV, TFGA…QDIY, VPFI…SIAA, IVGG…AAGW, LILH…FLLV, GVLI…LGFV, VVAI…TVVV, WMSM…NLGL, TAAM…AFMV, IHAV…FPVV, LGVI…GLAL, and VFSI…VGWW.

It belongs to the MptA/B family.

It is found in the membrane. The protein operates within cell wall biogenesis; cell wall polysaccharide biosynthesis. Functionally, involved in the initiation of core alpha-(1-&gt;6) mannan biosynthesis of lipomannan (LM-A) and multi-mannosylated polymer (LM-B), extending triacylatedphosphatidyl-myo-inositol dimannoside (Ac1PIM2) and mannosylated glycolipid, 1,2-di-O-C16/C18:1-(alpha-D-mannopyranosyl)-(1-&gt;4)-(alpha-D-glucopyranosyluronic acid)-(1-&gt;3)-glycerol (Man1GlcAGroAc2), respectively. Catalyzes the addition of alpha-(1-&gt;6)-mannose residue. This chain is Alpha-(1-&gt;6)-mannopyranosyltransferase B (mptB), found in Corynebacterium glutamicum (strain ATCC 13032 / DSM 20300 / JCM 1318 / BCRC 11384 / CCUG 27702 / LMG 3730 / NBRC 12168 / NCIMB 10025 / NRRL B-2784 / 534).